The sequence spans 198 residues: Large ribosomal subunit protein uL23c (198 aa).

The N-terminal 76 residues, 1–76 (MATTAPNLHS…SFGRDLMVAQ (76 aa)), are a transit peptide targeting the chloroplast.

Belongs to the universal ribosomal protein uL23 family. As to quaternary structure, component of the chloroplast large ribosomal subunit (LSU). Mature 70S chloroplast ribosomes of higher plants consist of a small (30S) and a large (50S) subunit. The 30S small subunit contains 1 molecule of ribosomal RNA (16S rRNA) and 24 different proteins. The 50S large subunit contains 3 rRNA molecules (23S, 5S and 4.5S rRNA) and 33 different proteins.

It localises to the plastid. It is found in the chloroplast. Functionally, component of the chloroplast ribosome (chloro-ribosome), a dedicated translation machinery responsible for the synthesis of chloroplast genome-encoded proteins, including proteins of the transcription and translation machinery and components of the photosynthetic apparatus. The chain is Large ribosomal subunit protein uL23c (RPL23) from Spinacia oleracea (Spinach).